The following is a 262-amino-acid chain: Homeobox-leucine zipper protein HOX24 (262 aa).

Disordered stretches follow at residues 44–68 (AAGRGGGDGDGGGGGGGGGGERKRR) and 162–189 (LNERQDQSGSCDGGGAEGDDDDKRNSVM). Residues 46 to 62 (GRGGGDGDGGGGGGGGG) are compositionally biased toward gly residues. Positions 61–122 (GGGERKRRFT…NKRARWRSKQ (62 aa)) form a DNA-binding region, homeobox. The tract at residues 121-165 (KQIEHDYAALRAQYDALHARVESLRQEKLALAAQVDELRGKLNER) is leucine-zipper.

Belongs to the HD-ZIP homeobox family. Class I subfamily. In terms of tissue distribution, expressed in roots and panicles.

The protein localises to the nucleus. Probable transcription factor. The sequence is that of Homeobox-leucine zipper protein HOX24 (HOX24) from Oryza sativa subsp. indica (Rice).